Consider the following 381-residue polypeptide: L-lactate dehydrogenase (381 aa).

The FMN hydroxy acid dehydrogenase domain maps to 1-380; it reads MIISASTDYR…SADSLVRELG (380 aa). Tyrosine 24 is a substrate binding site. Serine 106 and glutamine 127 together coordinate FMN. Residue tyrosine 129 coordinates substrate. Residue threonine 155 coordinates FMN. Arginine 164 provides a ligand contact to substrate. Lysine 251 contacts FMN. Histidine 275 functions as the Proton acceptor in the catalytic mechanism. Arginine 278 serves as a coordination point for substrate. 306-330 serves as a coordination point for FMN; it reads DSGIRTGLDVVRMIALGADSVLLGR.

Belongs to the FMN-dependent alpha-hydroxy acid dehydrogenase family. In terms of assembly, homotetramer. FMN serves as cofactor.

The protein localises to the cell inner membrane. The catalysed reaction is (S)-lactate + A = pyruvate + AH2. Catalyzes the conversion of L-lactate to pyruvate. Is coupled to the respiratory chain. This is L-lactate dehydrogenase from Pseudomonas paraeruginosa (strain DSM 24068 / PA7) (Pseudomonas aeruginosa (strain PA7)).